The primary structure comprises 90 residues: Putative defensin-like protein 243 (90 aa).

The first 19 residues, 1–19 (MKVEVIFLASCVLFSLIHA), serve as a signal peptide directing secretion. Cystine bridges form between Cys-33-Cys-88, Cys-43-Cys-72, Cys-53-Cys-82, and Cys-70-Cys-84.

The protein belongs to the DEFL family.

The protein resides in the secreted. The protein is Putative defensin-like protein 243 (SCRL9) of Arabidopsis thaliana (Mouse-ear cress).